A 316-amino-acid polypeptide reads, in one-letter code: Methionyl-tRNA formyltransferase (316 aa).

112–115 (SLLP) lines the (6S)-5,6,7,8-tetrahydrofolate pocket.

Belongs to the Fmt family.

It catalyses the reaction L-methionyl-tRNA(fMet) + (6R)-10-formyltetrahydrofolate = N-formyl-L-methionyl-tRNA(fMet) + (6S)-5,6,7,8-tetrahydrofolate + H(+). Functionally, attaches a formyl group to the free amino group of methionyl-tRNA(fMet). The formyl group appears to play a dual role in the initiator identity of N-formylmethionyl-tRNA by promoting its recognition by IF2 and preventing the misappropriation of this tRNA by the elongation apparatus. This Flavobacterium psychrophilum (strain ATCC 49511 / DSM 21280 / CIP 103535 / JIP02/86) protein is Methionyl-tRNA formyltransferase.